The primary structure comprises 126 residues: Prefoldin subunit beta (126 aa).

Belongs to the prefoldin subunit beta family. In terms of assembly, heterohexamer of two alpha and four beta subunits.

It is found in the cytoplasm. Functionally, molecular chaperone capable of stabilizing a range of proteins. Seems to fulfill an ATP-independent, HSP70-like function in archaeal de novo protein folding. The polypeptide is Prefoldin subunit beta (pfdB) (Pyrobaculum aerophilum (strain ATCC 51768 / DSM 7523 / JCM 9630 / CIP 104966 / NBRC 100827 / IM2)).